Consider the following 423-residue polypeptide: tRNA(Ile)-lysidine synthase (423 aa).

Position 18–23 (18–23 (SGGADS)) interacts with ATP.

It belongs to the tRNA(Ile)-lysidine synthase family.

It is found in the cytoplasm. The catalysed reaction is cytidine(34) in tRNA(Ile2) + L-lysine + ATP = lysidine(34) in tRNA(Ile2) + AMP + diphosphate + H(+). Functionally, ligates lysine onto the cytidine present at position 34 of the AUA codon-specific tRNA(Ile) that contains the anticodon CAU, in an ATP-dependent manner. Cytidine is converted to lysidine, thus changing the amino acid specificity of the tRNA from methionine to isoleucine. The protein is tRNA(Ile)-lysidine synthase of Aromatoleum aromaticum (strain DSM 19018 / LMG 30748 / EbN1) (Azoarcus sp. (strain EbN1)).